The sequence spans 1327 residues: Putative ATP-dependent RNA helicase ucp12 (1327 aa).

Disordered stretches follow at residues 1-58 (MGSK…KQLV) and 201-222 (QAARASSAAKPPPKASQKNEKV). Residues 18 to 41 (SKNKEKNIKGKKKNSLDPIEKNKQ) show a composition bias toward basic and acidic residues. Positions 42-58 (ETAGLQTTSRPTAKQLV) are enriched in polar residues. A UBA domain is found at 276–315 (EPDTSIVNDLISLGFRDIHAKEACQYCVSLEDALEWLIIH). Residues 405–504 (DDVSALQSIL…NHLQENIEDF (100 aa)) form the RWD domain. In terms of domain architecture, Helicase ATP-binding spans 587 to 756 (MDAIQHSQVV…FGNAGHLHIH (170 aa)). 600-607 (GETGSGKS) serves as a coordination point for ATP. A DEAH box motif is present at residues 703–706 (DEVH). A Helicase C-terminal domain is found at 797–968 (LISRLVSSID…QVCLNVVPLV (172 aa)).

The protein belongs to the DEAD box helicase family. DEAH subfamily.

The protein resides in the cytoplasm. The catalysed reaction is ATP + H2O = ADP + phosphate + H(+). Its function is as follows. Probable ATP-binding RNA helicase. The chain is Putative ATP-dependent RNA helicase ucp12 (ucp12) from Schizosaccharomyces pombe (strain 972 / ATCC 24843) (Fission yeast).